We begin with the raw amino-acid sequence, 131 residues long: Profilin LP04 (131 aa).

Belongs to the profilin family. Occurs in many kinds of cells as a complex with monomeric actin in a 1:1 ratio.

It localises to the cytoplasm. Its subcellular location is the cytoskeleton. Functionally, binds to actin and affects the structure of the cytoskeleton. At high concentrations, profilin prevents the polymerization of actin, whereas it enhances it at low concentrations. By binding to PIP2, it inhibits the formation of IP3 and DG. The sequence is that of Profilin LP04 from Oryza sativa subsp. indica (Rice).